Reading from the N-terminus, the 83-residue chain is Sulfur carrier protein TusA (83 aa).

Cysteine 20 acts as the Cysteine persulfide intermediate in catalysis.

This sequence belongs to the sulfur carrier protein TusA family.

The protein resides in the cytoplasm. Its function is as follows. Sulfur carrier protein which probably makes part of a sulfur-relay system. The protein is Sulfur carrier protein TusA of Pseudoalteromonas atlantica (strain T6c / ATCC BAA-1087).